Here is a 643-residue protein sequence, read N- to C-terminus: Threonine--tRNA ligase (643 aa).

Residues 1-61 form the TGS domain; sequence MVAISLPDGS…TTDASVSLIT (61 aa). Residues 243–534 are catalytic; the sequence is DHRRVGQEMD…LIENCAGRFP (292 aa). Residues Cys334, His385, and His511 each coordinate Zn(2+).

Belongs to the class-II aminoacyl-tRNA synthetase family. As to quaternary structure, homodimer. Requires Zn(2+) as cofactor.

The protein resides in the cytoplasm. The enzyme catalyses tRNA(Thr) + L-threonine + ATP = L-threonyl-tRNA(Thr) + AMP + diphosphate + H(+). In terms of biological role, catalyzes the attachment of threonine to tRNA(Thr) in a two-step reaction: L-threonine is first activated by ATP to form Thr-AMP and then transferred to the acceptor end of tRNA(Thr). Also edits incorrectly charged L-seryl-tRNA(Thr). The sequence is that of Threonine--tRNA ligase from Rhodospirillum rubrum (strain ATCC 11170 / ATH 1.1.1 / DSM 467 / LMG 4362 / NCIMB 8255 / S1).